We begin with the raw amino-acid sequence, 312 residues long: MPSAIEAIYIILIAGELTIGIWGNGFIVLVNCXDWLKRRDISLIDIILISLAISRICLLCVISLDGFFMLLFPGTYGNSVLVSIVNVVWTFANNSSLWFTSCLSIFYLLKIANISHPFFFWLKLKINKVMLAILLGSFLISLIISVXKNDDMWYHLFKVSXEENITWEFKVSKIPGTFKQLTLNLGGRVPFILCLISFFLLLFSLVRHTKQIQLHATGFRDPSTEAHMRAIKAVIIFLLLLIVYYPVFLVMTSSALIPQGKLVLMIGDIVTVIFPSSHSFILIMGNSKLREAFLKMLRFVKGFLRRRKPFVP.

Residues 1–9 (MPSAIEAIY) are Extracellular-facing. The chain crosses the membrane as a helical span at residues 10 to 32 (IILIAGELTIGIWGNGFIVLVNC). Residues 33–52 (XDWLKRRDISLIDIILISLA) are Cytoplasmic-facing. The chain crosses the membrane as a helical span at residues 53–72 (ISRICLLCVISLDGFFMLLF). Topologically, residues 73-86 (PGTYGNSVLVSIVN) are extracellular. A helical membrane pass occupies residues 87–109 (VVWTFANNSSLWFTSCLSIFYLL). At 110 to 128 (KIANISHPFFFWLKLKINK) the chain is on the cytoplasmic side. Residues 129 to 146 (VMLAILLGSFLISLIISV) traverse the membrane as a helical segment. The Extracellular segment spans residues 147-180 (XKNDDMWYHLFKVSXEENITWEFKVSKIPGTFKQ). A glycan (N-linked (GlcNAc...) asparagine) is linked at asparagine 164. Residues 181–203 (LTLNLGGRVPFILCLISFFLLLF) traverse the membrane as a helical segment. At 204–234 (SLVRHTKQIQLHATGFRDPSTEAHMRAIKAV) the chain is on the cytoplasmic side. Residues 235-257 (IIFLLLLIVYYPVFLVMTSSALI) traverse the membrane as a helical segment. Residues 258-261 (PQGK) are Extracellular-facing. The chain crosses the membrane as a helical span at residues 262–284 (LVLMIGDIVTVIFPSSHSFILIM). The Cytoplasmic segment spans residues 285–312 (GNSKLREAFLKMLRFVKGFLRRRKPFVP).

It belongs to the G-protein coupled receptor T2R family.

The protein localises to the membrane. Functionally, gustducin-coupled receptor implicated in the perception of bitter compounds in the oral cavity and the gastrointestinal tract. Signals through PLCB2 and the calcium-regulated cation channel TRPM5. The protein is Taste receptor type 2 member 9 (TAS2R9) of Pan troglodytes (Chimpanzee).